A 469-amino-acid polypeptide reads, in one-letter code: ATP synthase subunit beta (469 aa).

Glycine 155–threonine 162 provides a ligand contact to ATP.

It belongs to the ATPase alpha/beta chains family. F-type ATPases have 2 components, CF(1) - the catalytic core - and CF(0) - the membrane proton channel. CF(1) has five subunits: alpha(3), beta(3), gamma(1), delta(1), epsilon(1). CF(0) has three main subunits: a(1), b(2) and c(9-12). The alpha and beta chains form an alternating ring which encloses part of the gamma chain. CF(1) is attached to CF(0) by a central stalk formed by the gamma and epsilon chains, while a peripheral stalk is formed by the delta and b chains.

It localises to the cell inner membrane. The catalysed reaction is ATP + H2O + 4 H(+)(in) = ADP + phosphate + 5 H(+)(out). In terms of biological role, produces ATP from ADP in the presence of a proton gradient across the membrane. The catalytic sites are hosted primarily by the beta subunits. This is ATP synthase subunit beta from Syntrophus aciditrophicus (strain SB).